Consider the following 337-residue polypeptide: Glycerol-3-phosphate dehydrogenase [NAD(P)+] (337 aa).

The NADPH site is built by Trp12 and Lys107. Positions 107, 138, and 140 each coordinate sn-glycerol 3-phosphate. Ala142 is an NADPH binding site. Sn-glycerol 3-phosphate-binding residues include Lys193, Asp246, Ser256, Arg257, and Asn258. The active-site Proton acceptor is the Lys193. Arg257 serves as a coordination point for NADPH. 2 residues coordinate NADPH: Val282 and Glu284.

The protein belongs to the NAD-dependent glycerol-3-phosphate dehydrogenase family.

The protein localises to the cytoplasm. The enzyme catalyses sn-glycerol 3-phosphate + NAD(+) = dihydroxyacetone phosphate + NADH + H(+). It catalyses the reaction sn-glycerol 3-phosphate + NADP(+) = dihydroxyacetone phosphate + NADPH + H(+). It participates in membrane lipid metabolism; glycerophospholipid metabolism. Functionally, catalyzes the reduction of the glycolytic intermediate dihydroxyacetone phosphate (DHAP) to sn-glycerol 3-phosphate (G3P), the key precursor for phospholipid synthesis. This chain is Glycerol-3-phosphate dehydrogenase [NAD(P)+], found in Koribacter versatilis (strain Ellin345).